A 233-amino-acid polypeptide reads, in one-letter code: UPF0758 protein RoseRS_0767 (233 aa).

One can recognise an MPN domain in the interval 107 to 229 (LIRSPTDAAQ…FVSMRERGLG (123 aa)). Zn(2+)-binding residues include H178, H180, and D191. The short motif at 178-191 (HNHPSGDPTPSPED) is the JAMM motif element.

It belongs to the UPF0758 family.

This Roseiflexus sp. (strain RS-1) protein is UPF0758 protein RoseRS_0767.